Reading from the N-terminus, the 349-residue chain is CCN family member 2 (349 aa).

Residues 1–26 form the signal peptide; it reads MSATGLSPVRCAFVLLLALCSRPASG. An IGFBP N-terminal domain is found at 27–98; it reads QDCSGQCQCA…NRKIGVCTAK (72 aa). 6 disulfides stabilise this stretch: Cys29–Cys54, Cys33–Cys56, Cys35–Cys57, Cys43–Cys60, Cys68–Cys82, and Cys74–Cys95. The region spanning 101–167 is the VWFC domain; it reads APCVFGGTVY…GKCCEEWVCD (67 aa). One can recognise a TSP type-1 domain in the interval 198–243; the sequence is NCLVQTTEWSACSKTCGMGISTRVTNDNAFCRLEKQSRLCMVRPCE. Positions 247 to 349 are heparin-binding; the sequence is EENIKKGKKC…YYRKMYGDMA (103 aa). Intrachain disulfides connect Cys256–Cys293, Cys273–Cys307, Cys284–Cys323, Cys287–Cys325, and Cys292–Cys329. Positions 256-330 constitute a CTCK domain; sequence CIRTPKISKP…KTCACHYNCP (75 aa).

Belongs to the CCN family. In terms of assembly, monomer. Interacts with TSKU.

It is found in the secreted. The protein resides in the extracellular space. Its subcellular location is the extracellular matrix. In terms of biological role, major connective tissue mitoattractant secreted by vascular endothelial cells. Promotes proliferation and differentiation of chondrocytes. Is involved in the stimulation of osteoblast differentiation and has a critical role in osteogenesis. Mediates heparin- and divalent cation-dependent cell adhesion in many cell types including fibroblasts, myofibroblasts, endothelial and epithelial cells. Enhances fibroblast growth factor-induced DNA synthesis. This Sus scrofa (Pig) protein is CCN family member 2 (CCN2).